The following is a 129-amino-acid chain: Phosphoribosyl-AMP cyclohydrolase (129 aa).

Residue aspartate 76 coordinates Mg(2+). Residue cysteine 77 participates in Zn(2+) binding. Mg(2+) is bound by residues aspartate 78 and aspartate 80. Positions 97 and 104 each coordinate Zn(2+).

This sequence belongs to the PRA-CH family. As to quaternary structure, homodimer. Mg(2+) serves as cofactor. Zn(2+) is required as a cofactor.

The protein resides in the cytoplasm. It carries out the reaction 1-(5-phospho-beta-D-ribosyl)-5'-AMP + H2O = 1-(5-phospho-beta-D-ribosyl)-5-[(5-phospho-beta-D-ribosylamino)methylideneamino]imidazole-4-carboxamide. Its pathway is amino-acid biosynthesis; L-histidine biosynthesis; L-histidine from 5-phospho-alpha-D-ribose 1-diphosphate: step 3/9. In terms of biological role, catalyzes the hydrolysis of the adenine ring of phosphoribosyl-AMP. The chain is Phosphoribosyl-AMP cyclohydrolase from Polaromonas sp. (strain JS666 / ATCC BAA-500).